We begin with the raw amino-acid sequence, 572 residues long: Acetyl-coenzyme A synthetase (572 aa).

T260 lines the CoA pocket. ATP contacts are provided by residues 333–335 (GEP), 354–359 (DTWWMT), D440, and R455. Residue S463 participates in CoA binding. R466 is an ATP binding site. 3 residues coordinate Mg(2+): V477, H479, and I482. K524 lines the CoA pocket. K549 carries the post-translational modification N6-acetyllysine.

Belongs to the ATP-dependent AMP-binding enzyme family. As to quaternary structure, interacts with FloT. Mg(2+) is required as a cofactor. In terms of processing, acetylated. Deacetylation by the SIR2-homolog deacetylase activates the enzyme.

The protein localises to the cell membrane. Its subcellular location is the membrane raft. It catalyses the reaction acetate + ATP + CoA = acetyl-CoA + AMP + diphosphate. Functionally, catalyzes the conversion of acetate into acetyl-CoA (AcCoA), an essential intermediate at the junction of anabolic and catabolic pathways. AcsA undergoes a two-step reaction. In the first half reaction, AcsA combines acetate with ATP to form acetyl-adenylate (AcAMP) intermediate. In the second half reaction, it can then transfer the acetyl group from AcAMP to the sulfhydryl group of CoA, forming the product AcCoA. Has a role in growth and sporulation on acetate. This Bacillus subtilis (strain 168) protein is Acetyl-coenzyme A synthetase (acsA).